The chain runs to 264 residues: 3'-5' ssDNA/RNA exonuclease TatD (264 aa).

Positions 92, 128, and 153 each coordinate a divalent metal cation.

The protein belongs to the metallo-dependent hydrolases superfamily. TatD-type hydrolase family. TatD subfamily. As to quaternary structure, monomer. The cofactor is Mg(2+).

It is found in the cytoplasm. In terms of biological role, 3'-5' exonuclease that prefers single-stranded DNA and RNA. May play a role in the H(2)O(2)-induced DNA damage repair. This is 3'-5' ssDNA/RNA exonuclease TatD from Dickeya dadantii (strain 3937) (Erwinia chrysanthemi (strain 3937)).